The sequence spans 285 residues: 3',5'-nucleoside bisphosphate phosphatase (285 aa).

Residues H7, H9, D14, H39, E64, and H75 each coordinate Mn(2+). Substrate-binding residues include D14 and H39. Substrate is bound by residues 99 to 102 (RLER) and 134 to 135 (RT). 3 residues coordinate Mn(2+): H191, D248, and H250. A substrate-binding site is contributed by H250.

This sequence belongs to the PHP family. In terms of assembly, monomer. Mn(2+) serves as cofactor.

It carries out the reaction a ribonucleoside 3',5'-bisphosphate + H2O = a ribonucleoside 5'-phosphate + phosphate. Hydrolyzes 3',5'-bisphosphonucleosides (pGp, pCp, pUp, and pIp) to nucleoside 5'-phosphate and orthophosphate. Has similar catalytic efficiencies with all the bases. Also shows activity with ribonucleoside 2'-deoxyribonucleoside 3',5'-bisphosphates. Does not show activity with nucleoside 2',5'-bisphosphates. This chain is 3',5'-nucleoside bisphosphate phosphatase, found in Chromobacterium violaceum (strain ATCC 12472 / DSM 30191 / JCM 1249 / CCUG 213 / NBRC 12614 / NCIMB 9131 / NCTC 9757 / MK).